We begin with the raw amino-acid sequence, 556 residues long: Single-strand DNA-binding protein (556 aa).

Disordered regions lie at residues 1-95 and 527-556; these read MDPK…SEVE and FVRP…VNSL. Composition is skewed to polar residues over residues 10–25 and 36–51; these read ENIT…TSDF and VNST…GSQE. Composition is skewed to basic and acidic residues over residues 52-73 and 539-548; these read TPEH…RLDA and DSRRTYESRP.

Interacts with host VIP2 that promotes T-DNA integration into the host genome. Forms a complex made of virE2 and host proteins VIP1 and VBF. Forms heterodimers with the chaperone protein virE1 that prevent virE2 anarchic homopolymerization. Interacts with A.thaliana VIP1 that mediates its translocation to the host nucleus. Forms a complex made of VirE2, host VIP1 and VIP2 and single-stranded DNA (ssDNA).

It is found in the secreted. The protein localises to the host nucleus. In terms of biological role, involved in DNA transformation; mediates the nuclear uptake of single-stranded DNA copies of the transferred DNA (T-DNA) element. Binds single-stranded but not double-stranded DNA regardless of nucleotide sequence composition. The polypeptide is Single-strand DNA-binding protein (virE2) (Agrobacterium fabrum (strain C58 / ATCC 33970) (Agrobacterium tumefaciens (strain C58))).